We begin with the raw amino-acid sequence, 1316 residues long: DNA-directed RNA polymerase subunit beta' (1316 aa).

Zn(2+)-binding residues include Cys-60, Cys-62, Cys-75, and Cys-78. Residues Asp-535, Asp-537, and Asp-539 each contribute to the Mg(2+) site. Zn(2+) contacts are provided by Cys-891, Cys-968, Cys-975, and Cys-978.

The protein belongs to the RNA polymerase beta' chain family. In terms of assembly, the RNAP catalytic core consists of 2 alpha, 1 beta, 1 beta' and 1 omega subunit. When a sigma factor is associated with the core the holoenzyme is formed, which can initiate transcription. The cofactor is Mg(2+). It depends on Zn(2+) as a cofactor.

It carries out the reaction RNA(n) + a ribonucleoside 5'-triphosphate = RNA(n+1) + diphosphate. Functionally, DNA-dependent RNA polymerase catalyzes the transcription of DNA into RNA using the four ribonucleoside triphosphates as substrates. The polypeptide is DNA-directed RNA polymerase subunit beta' (Mycobacterium leprae (strain Br4923)).